The following is a 319-amino-acid chain: Transcriptional regulator LsrR (319 aa).

Positions 32–55 (QSEISERLGLTRLKVSRLLEKGHQ) form a DNA-binding region, H-T-H motif.

This sequence belongs to the SorC transcriptional regulatory family.

It is found in the cytoplasm. Its activity is regulated as follows. Inactivated by phosphorylated autoinducer-2 (phospho-AI-2). Phospho-AI-2 acts by binding to LsrR, which is then unable to bind to the promoter regions, allowing the transcription of the target genes. In terms of biological role, transcriptional regulator that represses the expression of the lsr operon (lsrACDBFGE) in the absence of the quorum-sensing signaling molecule autoinducer 2 (AI-2). It also represses the expression of the lsrRK operon. Acts by binding to the intergenic region between the lsr operon and lsrR. In the presence of phosphorylated autoinducer-2 (phospho-AI-2), LsrR is inactivated, leading to the transcription of the genes. The regulatory function of LsrR was thought to be limited to the lsr operon, but it was subsequently shown to be involved, directly or indirectly, in the regulation of SPI-1 and flagella genes. It negatively regulates the expression of those genes, which reduces the ability of Salmonella to invade host cells. This is Transcriptional regulator LsrR from Salmonella typhimurium (strain LT2 / SGSC1412 / ATCC 700720).